Reading from the N-terminus, the 338-residue chain is UDP-glucose 4-epimerase (338 aa).

Residues 11–12, 31–36, 58–59, 80–84, Asn99, Ser124, Tyr149, Lys153, and Phe178 each bind NAD(+); these read FI, DNLCNS, DI, and FAGLK. Ser124 and Tyr149 together coordinate substrate. Residue Tyr149 is the Proton acceptor of the active site. Residues Asn179, 199 to 200, 216 to 218, Arg231, and 292 to 295 contribute to the substrate site; these read NL, SVF, and RAGD.

The protein belongs to the NAD(P)-dependent epimerase/dehydratase family. In terms of assembly, homodimer. The cofactor is NAD(+).

The enzyme catalyses UDP-alpha-D-glucose = UDP-alpha-D-galactose. It participates in carbohydrate metabolism; galactose metabolism. In terms of biological role, involved in the metabolism of galactose. Plays an essential role in the incorporation of galactose into meningococcal lipopolysaccharide surface molecules, which are important for pathogenesis. Catalyzes the conversion of UDP-galactose (UDP-Gal) to UDP-glucose (UDP-Glc) through a mechanism involving the transient reduction of NAD. The polypeptide is UDP-glucose 4-epimerase (galE) (Neisseria gonorrhoeae).